Reading from the N-terminus, the 78-residue chain is Acyl carrier protein (78 aa).

The 76-residue stretch at 2–77 (STIEERVKKI…AAIDYVKAHQ (76 aa)) folds into the Carrier domain. Residue serine 37 is modified to O-(pantetheine 4'-phosphoryl)serine.

The protein belongs to the acyl carrier protein (ACP) family. In terms of processing, 4'-phosphopantetheine is transferred from CoA to a specific serine of apo-ACP by AcpS. This modification is essential for activity because fatty acids are bound in thioester linkage to the sulfhydryl of the prosthetic group.

Its subcellular location is the cytoplasm. Its pathway is lipid metabolism; fatty acid biosynthesis. Carrier of the growing fatty acid chain in fatty acid biosynthesis. The chain is Acyl carrier protein from Pseudomonas putida (strain ATCC 700007 / DSM 6899 / JCM 31910 / BCRC 17059 / LMG 24140 / F1).